The sequence spans 273 residues: Dermonecrotic toxin LsaSicTox-alphaIB1aiii (273 aa).

The active site involves histidine 5. Residues glutamate 25 and aspartate 27 each coordinate Mg(2+). The active-site Nucleophile is the histidine 41. 2 disulfides stabilise this stretch: cysteine 45-cysteine 51 and cysteine 47-cysteine 190. Aspartate 85 contributes to the Mg(2+) binding site.

This sequence belongs to the arthropod phospholipase D family. Class II subfamily. Requires Mg(2+) as cofactor. Expressed by the venom gland.

The protein localises to the secreted. It carries out the reaction an N-(acyl)-sphingosylphosphocholine = an N-(acyl)-sphingosyl-1,3-cyclic phosphate + choline. The catalysed reaction is an N-(acyl)-sphingosylphosphoethanolamine = an N-(acyl)-sphingosyl-1,3-cyclic phosphate + ethanolamine. The enzyme catalyses a 1-acyl-sn-glycero-3-phosphocholine = a 1-acyl-sn-glycero-2,3-cyclic phosphate + choline. It catalyses the reaction a 1-acyl-sn-glycero-3-phosphoethanolamine = a 1-acyl-sn-glycero-2,3-cyclic phosphate + ethanolamine. Functionally, dermonecrotic toxins cleave the phosphodiester linkage between the phosphate and headgroup of certain phospholipids (sphingolipid and lysolipid substrates), forming an alcohol (often choline) and a cyclic phosphate. This toxin acts on sphingomyelin (SM). It may also act on ceramide phosphoethanolamine (CPE), lysophosphatidylcholine (LPC) and lysophosphatidylethanolamine (LPE), but not on lysophosphatidylserine (LPS), and lysophosphatidylglycerol (LPG). It acts by transphosphatidylation, releasing exclusively cyclic phosphate products as second products. Induces dermonecrosis, hemolysis, increased vascular permeability, edema, inflammatory response, and platelet aggregation. The polypeptide is Dermonecrotic toxin LsaSicTox-alphaIB1aiii (Loxosceles sabina (Tucson recluse spider)).